Here is a 778-residue protein sequence, read N- to C-terminus: Aerobic respiration control sensor protein ArcB (778 aa).

Over 1 to 25 the chain is Cytoplasmic; the sequence is MKQIRLLAQYYVDLMMKLGLVRFSM. A helical membrane pass occupies residues 26–46; sequence LLALALVVLAIVVQMAVTMVL. Residues 47–57 lie on the Periplasmic side of the membrane; sequence HGQVESIDVIR. Residues 58 to 78 traverse the membrane as a helical segment; it reads SIFFGLLITPWAVYFLSVVVE. The Cytoplasmic portion of the chain corresponds to 79 to 778; the sequence is QLEESRQRLS…KAWVAKATKK (700 aa). The region spanning 153–223 is the PAS domain; that stretch reads QSSFLRSFLD…ETDEKVFRHN (71 aa). The PAC domain maps to 226–278; the sequence is LTYEQWLDYPDGRKACFEIRKVPYYDRVGKRHGLMGFGRDITERKRYQDALER. One can recognise a Histidine kinase domain in the interval 289–507; the sequence is TISHELRTPL…TFTLTIHAPS (219 aa). H292 carries the post-translational modification Phosphohistidine; by autocatalysis. The Response regulatory domain maps to 527–643; sequence NVLLVEDIEL…ALTAMIKKFW (117 aa). Position 576 is a 4-aspartylphosphate (D576). Residues 678-771 enclose the HPt domain; it reads GPKLITDGLA…RHDVEVLKAW (94 aa). H717 carries the post-translational modification Phosphohistidine.

Post-translationally, activation requires a sequential transfer of a phosphate group from a His in the primary transmitter domain, to an Asp in the receiver domain and to a His in the secondary transmitter domain.

The protein localises to the cell inner membrane. It catalyses the reaction ATP + protein L-histidine = ADP + protein N-phospho-L-histidine.. Member of the two-component regulatory system ArcB/ArcA. Sensor-regulator protein for anaerobic repression of the arc modulon. Activates ArcA via a four-step phosphorelay. ArcB can also dephosphorylate ArcA by a reverse phosphorelay involving His-717 and Asp-576. This chain is Aerobic respiration control sensor protein ArcB (arcB), found in Escherichia coli (strain K12).